A 529-amino-acid chain; its full sequence is V-set and immunoglobulin domain-containing protein 10 (529 aa).

Residues 1-18 form the signal peptide; it reads MMITSAVVLYLLLLSHQT. 2 consecutive Ig-like C2-type domains span residues 19–110 and 129–217; these read VSEE…QTLS and PATF…QELL. Over 21 to 411 the chain is Extracellular; it reads EEQVQQFVIG…LNVKTSAGNG (391 aa). N-linked (GlcNAc...) asparagine glycans are attached at residues N34, N35, N46, N135, N147, N159, N211, N269, N280, N284, N330, N357, and N376. C40 and C96 are disulfide-bonded. A disulfide bridge connects residues C150 and C199. One can recognise an Ig-like C2-type 3 domain in the interval 317–403; the sequence is PTGQPLATAL…GARELEVYLN (87 aa). The cysteines at positions 335 and 387 are disulfide-linked. The chain crosses the membrane as a helical span at residues 412 to 432; that stretch reads GAIVGIFVSVLVMMIGIVVGV. The Cytoplasmic portion of the chain corresponds to 433–529; that stretch reads TVYTKRDRIC…PQRAELQPAV (97 aa).

Its subcellular location is the membrane. The polypeptide is V-set and immunoglobulin domain-containing protein 10 (vsig10) (Danio rerio (Zebrafish)).